A 313-amino-acid polypeptide reads, in one-letter code: Thymidylate synthase (313 aa).

Positions M1–H28 are disordered. Residues Q18 to H28 are compositionally biased toward basic and acidic residues. R50 is a binding site for dUMP. S114 carries the post-translational modification Phosphoserine. DUMP contacts are provided by residues R175–R176, C195–H196, R215–D218, N226, and H256–Y258. The Nucleophile role is filled by C195. (6R)-5,10-methylene-5,6,7,8-tetrahydrofolate is bound at residue D218. Glycyl lysine isopeptide (Lys-Gly) (interchain with G-Cter in SUMO2) cross-links involve residues K287, K292, and K308. Position 312 (A312) interacts with (6R)-5,10-methylene-5,6,7,8-tetrahydrofolate.

This sequence belongs to the thymidylate synthase family. Homodimer.

The protein localises to the nucleus. Its subcellular location is the cytoplasm. The protein resides in the mitochondrion. It localises to the mitochondrion matrix. It is found in the mitochondrion inner membrane. The enzyme catalyses dUMP + (6R)-5,10-methylene-5,6,7,8-tetrahydrofolate = 7,8-dihydrofolate + dTMP. It functions in the pathway pyrimidine metabolism; dTTP biosynthesis. Catalyzes the reductive methylation of 2'-deoxyuridine 5'-monophosphate (dUMP) to thymidine 5'-monophosphate (dTMP), using the cosubstrate, 5,10- methylenetetrahydrofolate (CH2H4folate) as a 1-carbon donor and reductant and contributes to the de novo mitochondrial thymidylate biosynthesis pathway. This is Thymidylate synthase from Homo sapiens (Human).